The following is a 391-amino-acid chain: Elongation factor Tu (391 aa).

The tr-type G domain maps to 10-201 (KPHVNIGTIG…AVDAYIPTPE (192 aa)). The segment at 19–26 (GHVDHGKT) is G1. 19 to 26 (GHVDHGKT) serves as a coordination point for GTP. Residue T26 coordinates Mg(2+). The G2 stretch occupies residues 55 to 59 (GITIS). The interval 76–79 (DCPG) is G3. GTP is bound by residues 76-80 (DCPGH) and 131-134 (NKVD). The interval 131-134 (NKVD) is G4. Residues 169 to 171 (SAL) are G5.

It belongs to the TRAFAC class translation factor GTPase superfamily. Classic translation factor GTPase family. EF-Tu/EF-1A subfamily. In terms of assembly, monomer.

The protein localises to the cytoplasm. The catalysed reaction is GTP + H2O = GDP + phosphate + H(+). Functionally, GTP hydrolase that promotes the GTP-dependent binding of aminoacyl-tRNA to the A-site of ribosomes during protein biosynthesis. The protein is Elongation factor Tu of Rhizobium johnstonii (strain DSM 114642 / LMG 32736 / 3841) (Rhizobium leguminosarum bv. viciae).